The sequence spans 417 residues: Odorant receptor Or1 (417 aa).

The Cytoplasmic portion of the chain corresponds to 1–2 (MK). A helical transmembrane segment spans residues 3–23 (LNKLNPRWDAYDRRDSFWLQL). Topologically, residues 24-45 (LCLKYLGLWPPEDTDQATRNRY) are extracellular. A helical membrane pass occupies residues 46–66 (IAYGWALRIMFLHLYALTQAL). Topologically, residues 67-73 (YFKDVKD) are cytoplasmic. Residues 74-94 (INDIANALFVLMTQVTLIYKL) traverse the membrane as a helical segment. Residues 95–133 (EKFNYNIARIQACLRKLNCTLYHPKQREEFSPVLQSMSG) are Extracellular-facing. N-linked (GlcNAc...) asparagine glycosylation is present at N112. A helical membrane pass occupies residues 134 to 154 (VFWLMIFLMFVAIFTIIMWVM). Topologically, residues 155 to 178 (SPAFDNERRLPVPAWFPVDYHHSD) are cytoplasmic. Residues 179–199 (IVYGVLFLYQTIGIVMSATYN) form a helical membrane-spanning segment. At 200–284 (FSTDTMFSGL…ILSFGDEVQD (85 aa)) the chain is on the extracellular side. A helical transmembrane segment spans residues 285–305 (IFQGSIFAQVCASVIIICMTL). Residues 306–317 (LQATGDDVTMAD) are Cytoplasmic-facing. A helical transmembrane segment spans residues 318 to 338 (LLGCGFYLLVMTSQVFIFCYV). The Extracellular segment spans residues 339–417 (GNEISYTTDK…LAVLQSMESE (79 aa)).

Belongs to the insect chemoreceptor superfamily. Heteromeric odorant receptor channel (TC 1.A.69) family. Or2a subfamily. In terms of tissue distribution, female-specific antennae and maxillary palp expression.

Its subcellular location is the cell membrane. In terms of biological role, odorant receptor which plays a critical role in the anthropophilic host-seeking behavior; establishes the host preference to transmit malaria. May participate in the phenomenon of decreased host-seeking behavior in disease vector mosquitoes after blood feeding. The protein is Odorant receptor Or1 (OR1) of Anopheles gambiae (African malaria mosquito).